Reading from the N-terminus, the 120-residue chain is Dense granule protein 5 (120 aa).

The signal sequence occupies residues 1–25; it reads MASVKRVVVAVMIVNVLALIFVGVA. Residues 27 to 59 form a disordered region; that stretch reads STRDVGSGGDDSEGARGREQQQVQQHEQNEDRS. A helical transmembrane segment spans residues 76 to 93; that stretch reads AVGLAAAVVAVVSLLRLL. Residues 100–109 are compositionally biased toward basic and acidic residues; sequence AIQEESKESA. Residues 100–120 form a disordered region; sequence AIQEESKESATAEEEEVAEEE. Positions 110 to 120 are enriched in acidic residues; sequence TAEEEEVAEEE.

Its subcellular location is the secreted. The protein resides in the parasitophorous vacuole lumen. It localises to the parasitophorous vacuole membrane. It is found in the cytoplasmic vesicle. The protein localises to the secretory vesicle. Functionally, plays a role in the function of the cyst and parasitophorous vacuole membranes and therefore in host-parasite interactions. The polypeptide is Dense granule protein 5 (GRA5) (Toxoplasma gondii).